The following is a 117-amino-acid chain: Large ribosomal subunit protein bL20 (117 aa).

This sequence belongs to the bacterial ribosomal protein bL20 family.

Functionally, binds directly to 23S ribosomal RNA and is necessary for the in vitro assembly process of the 50S ribosomal subunit. It is not involved in the protein synthesizing functions of that subunit. This chain is Large ribosomal subunit protein bL20, found in Gloeothece citriformis (strain PCC 7424) (Cyanothece sp. (strain PCC 7424)).